Here is a 215-residue protein sequence, read N- to C-terminus: uncharacterized protein (215 aa).

The next 6 helical transmembrane spans lie at 3–23 (LLAY…LRSI), 30–50 (ANLL…GLTW), 59–79 (LGLS…LRFW), 87–107 (WGTY…AICV), 122–142 (VSTC…SNIY), and 156–176 (VLFG…LIYV).

This sequence belongs to the major facilitator superfamily. Allantoate permease family.

The protein localises to the membrane. This is an uncharacterized protein from Saccharomyces cerevisiae (strain ATCC 204508 / S288c) (Baker's yeast).